The primary structure comprises 192 residues: Thymidylate kinase (192 aa).

7 to 14 serves as a coordination point for ATP; it reads GIDCVGKS.

Belongs to the thymidylate kinase family.

The enzyme catalyses dTMP + ATP = dTDP + ADP. Its function is as follows. Phosphorylation of dTMP to form dTDP in both de novo and salvage pathways of dTTP synthesis. This is Thymidylate kinase (tmk) from Campylobacter jejuni subsp. jejuni serotype O:2 (strain ATCC 700819 / NCTC 11168).